A 149-amino-acid polypeptide reads, in one-letter code: 3-dehydroquinate dehydratase (149 aa).

Tyr-23 serves as the catalytic Proton acceptor. Substrate contacts are provided by Asn-75, His-81, and Asp-88. His-101 functions as the Proton donor in the catalytic mechanism. Substrate-binding positions include 102–103 and Arg-112; that span reads MS.

Belongs to the type-II 3-dehydroquinase family. Homododecamer.

The catalysed reaction is 3-dehydroquinate = 3-dehydroshikimate + H2O. It participates in metabolic intermediate biosynthesis; chorismate biosynthesis; chorismate from D-erythrose 4-phosphate and phosphoenolpyruvate: step 3/7. In terms of biological role, catalyzes a trans-dehydration via an enolate intermediate. In Pelobacter propionicus (strain DSM 2379 / NBRC 103807 / OttBd1), this protein is 3-dehydroquinate dehydratase.